We begin with the raw amino-acid sequence, 467 residues long: Fumarate hydratase class II (467 aa).

Substrate contacts are provided by residues 98 to 100 (SGT), Arg-126, 129 to 132 (HPND), 139 to 141 (SSN), and Thr-187. Residue His-188 is the Proton donor/acceptor of the active site. Residue Ser-318 is part of the active site. Substrate-binding positions include Ser-319 and 324 to 326 (KVN).

The protein belongs to the class-II fumarase/aspartase family. Fumarase subfamily. Homotetramer.

It localises to the cytoplasm. The enzyme catalyses (S)-malate = fumarate + H2O. It participates in carbohydrate metabolism; tricarboxylic acid cycle; (S)-malate from fumarate: step 1/1. In terms of biological role, involved in the TCA cycle. Catalyzes the stereospecific interconversion of fumarate to L-malate. This Escherichia coli O6:H1 (strain CFT073 / ATCC 700928 / UPEC) protein is Fumarate hydratase class II.